The following is a 156-amino-acid chain: Protein-export protein SecB (156 aa).

This sequence belongs to the SecB family. As to quaternary structure, homotetramer, a dimer of dimers. One homotetramer interacts with 1 SecA dimer.

The protein resides in the cytoplasm. Its function is as follows. One of the proteins required for the normal export of preproteins out of the cell cytoplasm. It is a molecular chaperone that binds to a subset of precursor proteins, maintaining them in a translocation-competent state. It also specifically binds to its receptor SecA. The protein is Protein-export protein SecB of Aliivibrio fischeri (strain ATCC 700601 / ES114) (Vibrio fischeri).